Here is a 550-residue protein sequence, read N- to C-terminus: Probable endochitinase (550 aa).

The signal sequence occupies residues 1 to 16; sequence MLHYLATILWLAVAHA. N-linked (GlcNAc...) asparagine; by host glycans are attached at residues Asn146 and Asn172. In terms of domain architecture, GH18 spans 147-547; it reads KTVAAYFVEW…NAMNERVRVK (401 aa). Glu304 acts as the Proton donor in catalysis. Asn344 carries N-linked (GlcNAc...) asparagine; by host glycosylation. A Prevents secretion from ER motif is present at residues 547 to 550; it reads KDEL.

This sequence belongs to the glycosyl hydrolase 18 family. Chitinase class II subfamily.

The protein resides in the host endoplasmic reticulum lumen. It carries out the reaction Random endo-hydrolysis of N-acetyl-beta-D-glucosaminide (1-&gt;4)-beta-linkages in chitin and chitodextrins.. This is Probable endochitinase from Orgyia pseudotsugata (Douglas-fir tussock moth).